Consider the following 497-residue polypeptide: Long chain base biosynthesis protein 2c (497 aa).

The helical transmembrane segment at valine 4–histidine 24 threads the bilayer. Residue lysine 319 is modified to N6-(pyridoxal phosphate)lysine.

This sequence belongs to the class-II pyridoxal-phosphate-dependent aminotransferase family. Heterodimer with LCB1. Component of the serine palmitoyltransferase (SPT) complex, composed of LCB1 and LCB2. Pyridoxal 5'-phosphate is required as a cofactor.

It localises to the endoplasmic reticulum membrane. The catalysed reaction is L-serine + hexadecanoyl-CoA + H(+) = 3-oxosphinganine + CO2 + CoA. Its pathway is lipid metabolism; sphingolipid metabolism. Functionally, serine palmitoyltransferase (SPT). The heterodimer formed with LCB1 constitutes the catalytic core. This chain is Long chain base biosynthesis protein 2c, found in Oryza sativa subsp. japonica (Rice).